Here is a 213-residue protein sequence, read N- to C-terminus: Orotate phosphoribosyltransferase (213 aa).

5-phospho-alpha-D-ribose 1-diphosphate is bound at residue Lys26. 34–35 (FF) provides a ligand contact to orotate. 5-phospho-alpha-D-ribose 1-diphosphate contacts are provided by residues 72–73 (YK), Arg99, Lys100, Lys103, His105, and 124–132 (DDVITAGTA). Thr128 and Arg156 together coordinate orotate.

Belongs to the purine/pyrimidine phosphoribosyltransferase family. PyrE subfamily. As to quaternary structure, homodimer. Mg(2+) is required as a cofactor.

The enzyme catalyses orotidine 5'-phosphate + diphosphate = orotate + 5-phospho-alpha-D-ribose 1-diphosphate. It functions in the pathway pyrimidine metabolism; UMP biosynthesis via de novo pathway; UMP from orotate: step 1/2. Its function is as follows. Catalyzes the transfer of a ribosyl phosphate group from 5-phosphoribose 1-diphosphate to orotate, leading to the formation of orotidine monophosphate (OMP). In Edwardsiella ictaluri (strain 93-146), this protein is Orotate phosphoribosyltransferase.